Here is a 293-residue protein sequence, read N- to C-terminus: Nucleotide-binding protein HRM2_27900 (293 aa).

11–18 (GLSGSGKS) is an ATP binding site. 62 to 65 (DIRA) serves as a coordination point for GTP.

It belongs to the RapZ-like family.

Its function is as follows. Displays ATPase and GTPase activities. This chain is Nucleotide-binding protein HRM2_27900, found in Desulforapulum autotrophicum (strain ATCC 43914 / DSM 3382 / VKM B-1955 / HRM2) (Desulfobacterium autotrophicum).